The following is a 71-amino-acid chain: Disintegrin applaggin (71 aa).

Residues Glu-1–His-71 form the Disintegrin domain. Cystine bridges form between Cys-6–Cys-21, Cys-8–Cys-16, Cys-15–Cys-38, Cys-29–Cys-35, Cys-34–Cys-58, and Cys-47–Cys-65. The Cell attachment site signature appears at Arg-50–Asp-52.

It belongs to the venom metalloproteinase (M12B) family. P-II subfamily. P-IIa sub-subfamily. Monomer (disintegrin). As to expression, expressed by the venom gland.

It localises to the secreted. Inhibits fibrinogen interaction with platelets. Acts by binding to alpha-IIb/beta-3 (ITGA2B/ITGB3) on the platelet surface and inhibits aggregation induced by ADP, thrombin, platelet-activating factor and collagen. This is Disintegrin applaggin from Agkistrodon piscivorus piscivorus (Eastern cottonmouth).